A 351-amino-acid chain; its full sequence is MNPPKSAPDAQGLSYRDAGVDIDAGDALIDKIKPFAKKTLRDGVLGGIGGFGALFEVPKKYKEPVLVSGTDGVGTKLKLAFHLNKHDTVGQDLVAMSVNDILVQGAEPLFFLDYFACGKLDVDTAATVVKGIAQGCELSGCALIGGETAEMPGMYPDGEYDLAGFAVGAVEKSKIIDGSTIAEGDVVLGLASSGIHSNGFSLVRKIIERANPDLSADFHGRSLADALMAPTRIYVKPLLALMQKLTVKGMAHITGGGLVENIPRVLREGLTAELDQDAWPLPPLFKWLQEHGGVADAEMHRVFNCGIGMAVIVSAADADAAIADLTAAGEQVWKIGTVRATREGEAQTVVV.

Belongs to the AIR synthase family.

The protein resides in the cytoplasm. It catalyses the reaction 2-formamido-N(1)-(5-O-phospho-beta-D-ribosyl)acetamidine + ATP = 5-amino-1-(5-phospho-beta-D-ribosyl)imidazole + ADP + phosphate + H(+). It participates in purine metabolism; IMP biosynthesis via de novo pathway; 5-amino-1-(5-phospho-D-ribosyl)imidazole from N(2)-formyl-N(1)-(5-phospho-D-ribosyl)glycinamide: step 2/2. This chain is Phosphoribosylformylglycinamidine cyclo-ligase, found in Burkholderia lata (strain ATCC 17760 / DSM 23089 / LMG 22485 / NCIMB 9086 / R18194 / 383).